A 365-amino-acid chain; its full sequence is Probable caffeine synthase 4 (365 aa).

Tyr-18 is a binding site for S-adenosyl-L-homocysteine. Position 25 (Thr-25) interacts with caffeine. S-adenosyl-L-homocysteine contacts are provided by Cys-61, Asn-66, Asp-98, Leu-99, Ser-134, and Phe-135. Residues Tyr-152, His-155, and Trp-156 each coordinate caffeine. 4 residues coordinate Mg(2+): Asn-173, Asp-259, Phe-261, and Asn-262. Phe-317 is a binding site for caffeine.

The protein belongs to the methyltransferase superfamily. Type-7 methyltransferase family. Mg(2+) is required as a cofactor.

It participates in alkaloid biosynthesis. In terms of biological role, may be involved in the biosynthesis of caffeine. The sequence is that of Probable caffeine synthase 4 from Camellia sinensis (Tea plant).